A 406-amino-acid chain; its full sequence is Sorting nexin-6 (406 aa).

Met1 bears the N-acetylmethionine mark. N-acetylmethionine; in Sorting nexin-6, N-terminally processed is present on Met2. The interval 2–179 is interaction with PIM1; it reads MEGLDDGPDF…NQDLSVRGKN (178 aa). The 148-residue stretch at 26–173 folds into the PX domain; the sequence is LQSDAALQVD…HVFLEYNQDL (148 aa). A 1,2-diacyl-sn-glycero-3-phospho-(1D-myo-inositol-4,5-bisphosphate)-binding positions include 41-47, 100-106, and 114-117; these read SERDRVK, FDASREK, and EGSM. Ser116 and Ser194 each carry phosphoserine. A membrane-binding amphipathic helix region spans residues 182 to 199; that stretch reads EKLEDFFKNMVKSADGVI. The BAR domain maps to 203-406; sequence VKDVDDFFEH…NCLAVLNGDT (204 aa).

It belongs to the sorting nexin family. As to quaternary structure, forms heterodimers with BAR domain-containing sorting nexins SNX1 and SNX2. The heterodimers are proposed to self-assemble into helical arrays on the membrane to stabilize and expand local membrane curvature underlying endosomal tubule formation. Thought to be a component of the originally described retromer complex (also called SNX-BAR retromer) which is a pentamer containing the heterotrimeric retromer cargo-selective complex (CSC), also described as vacuolar protein sorting subcomplex (VPS), and a heterodimeric membrane-deforming subcomplex formed between SNX1 or SNX2 and SNX5 or SNX6 (also called SNX-BAR subcomplex); the respective CSC and SNX-BAR subcomplexes associate with low affinity. Interacts with SNX1, SNX2, VPS26A, VPS29, VPS35, TGFB receptors, BACE1, BRMS1, PIP5K1C. Interacts with DCTN1; the association with DCTN1 is involved in movement of retromer-c ontaining vesicles toward the TGN. Interacts with PIM1; translocating SNX6 to the nucleus. Interacts with CDKN1B and GIT1. Post-translationally, in vitro phosphorylated by PIM1; not affecting PIM1-dependent nuclear translocation.

Its subcellular location is the early endosome membrane. The protein resides in the cytoplasmic vesicle. The protein localises to the cytoplasm. It is found in the nucleus. Its function is as follows. Involved in several stages of intracellular trafficking. Interacts with membranes phosphatidylinositol 3,4-bisphosphate and/or phosphatidylinositol 4,5-bisphosphate. Acts in part as component of the retromer membrane-deforming SNX-BAR subcomplex. The SNX-BAR retromer mediates retrograde transport of cargo proteins from endosomes to the trans-Golgi network (TGN) and is involved in endosome-to-plasma membrane transport for cargo protein recycling. The SNX-BAR subcomplex functions to deform the donor membrane into a tubular profile called endosome-to-TGN transport carrier (ETC). Does not have in vitro vesicle-to-membrane remodeling activity. Involved in retrograde endosome-to-TGN transport of lysosomal enzyme receptor IGF2R. May function as link between transport vesicles and dynactin. Negatively regulates retrograde transport of BACE1 from the cell surface to the trans-Golgi network. Involved in E-cadherin sorting and degradation; inhibits PIP5K1C-mediated E-cadherin degradation. In association with GIT1 involved in EGFR degradation. Promotes lysosomal degradation of CDKN1B. May contribute to transcription regulation. This Mus musculus (Mouse) protein is Sorting nexin-6 (Snx6).